Consider the following 556-residue polypeptide: Arginine--tRNA ligase 1 (556 aa).

The short motif at 132 to 142 (ANPTGNLHLGH) is the 'HIGH' region element.

The protein belongs to the class-I aminoacyl-tRNA synthetase family. Monomer.

The protein resides in the cytoplasm. The enzyme catalyses tRNA(Arg) + L-arginine + ATP = L-arginyl-tRNA(Arg) + AMP + diphosphate. The chain is Arginine--tRNA ligase 1 (argS1) from Halalkalibacterium halodurans (strain ATCC BAA-125 / DSM 18197 / FERM 7344 / JCM 9153 / C-125) (Bacillus halodurans).